We begin with the raw amino-acid sequence, 114 residues long: Large ribosomal subunit protein uL22 (114 aa).

It belongs to the universal ribosomal protein uL22 family. In terms of assembly, part of the 50S ribosomal subunit.

Functionally, this protein binds specifically to 23S rRNA; its binding is stimulated by other ribosomal proteins, e.g. L4, L17, and L20. It is important during the early stages of 50S assembly. It makes multiple contacts with different domains of the 23S rRNA in the assembled 50S subunit and ribosome. Its function is as follows. The globular domain of the protein is located near the polypeptide exit tunnel on the outside of the subunit, while an extended beta-hairpin is found that lines the wall of the exit tunnel in the center of the 70S ribosome. The polypeptide is Large ribosomal subunit protein uL22 (Streptococcus pyogenes serotype M6 (strain ATCC BAA-946 / MGAS10394)).